Consider the following 363-residue polypeptide: Histidinol-phosphate aminotransferase (363 aa).

The residue at position 227 (lysine 227) is an N6-(pyridoxal phosphate)lysine.

The protein belongs to the class-II pyridoxal-phosphate-dependent aminotransferase family. Histidinol-phosphate aminotransferase subfamily. In terms of assembly, homodimer. It depends on pyridoxal 5'-phosphate as a cofactor.

It catalyses the reaction L-histidinol phosphate + 2-oxoglutarate = 3-(imidazol-4-yl)-2-oxopropyl phosphate + L-glutamate. It participates in amino-acid biosynthesis; L-histidine biosynthesis; L-histidine from 5-phospho-alpha-D-ribose 1-diphosphate: step 7/9. The polypeptide is Histidinol-phosphate aminotransferase (Akkermansia muciniphila (strain ATCC BAA-835 / DSM 22959 / JCM 33894 / BCRC 81048 / CCUG 64013 / CIP 107961 / Muc)).